A 255-amino-acid chain; its full sequence is Proteasome subunit alpha type-3 (255 aa).

Serine 2 is subject to N-acetylserine. 3 positions are modified to N6-acetyllysine: lysine 57, lysine 206, and lysine 230. Residues serine 243 and serine 250 each carry the phosphoserine modification.

Belongs to the peptidase T1A family. The 26S proteasome consists of a 20S proteasome core and two 19S regulatory subunits. The 20S proteasome core is a barrel-shaped complex made of 28 subunits that are arranged in four stacked rings. The two outer rings are each formed by seven alpha subunits, and the two inner rings are formed by seven beta subunits. The proteolytic activity is exerted by three beta-subunits PSMB5, PSMB6 and PSMB7. Interacts with AURKB. Interacts with CDKN1A. Interacts with MDM2 and RB1. Interacts with the C-terminus of TBXA2R isoform 2. Interacts with DNAJB2.

The protein resides in the cytoplasm. It is found in the nucleus. Functionally, component of the 20S core proteasome complex involved in the proteolytic degradation of most intracellular proteins. This complex plays numerous essential roles within the cell by associating with different regulatory particles. Associated with two 19S regulatory particles, forms the 26S proteasome and thus participates in the ATP-dependent degradation of ubiquitinated proteins. The 26S proteasome plays a key role in the maintenance of protein homeostasis by removing misfolded or damaged proteins that could impair cellular functions, and by removing proteins whose functions are no longer required. Associated with the PA200 or PA28, the 20S proteasome mediates ubiquitin-independent protein degradation. This type of proteolysis is required in several pathways including spermatogenesis (20S-PA200 complex) or generation of a subset of MHC class I-presented antigenic peptides (20S-PA28 complex). Binds to the C-terminus of CDKN1A and thereby mediates its degradation. Negatively regulates the membrane trafficking of the cell-surface thromboxane A2 receptor (TBXA2R) isoform 2. This chain is Proteasome subunit alpha type-3 (PSMA3), found in Bos taurus (Bovine).